The primary structure comprises 444 residues: Exodeoxyribonuclease 7 large subunit (444 aa).

Belongs to the XseA family. In terms of assembly, heterooligomer composed of large and small subunits.

It is found in the cytoplasm. It carries out the reaction Exonucleolytic cleavage in either 5'- to 3'- or 3'- to 5'-direction to yield nucleoside 5'-phosphates.. Bidirectionally degrades single-stranded DNA into large acid-insoluble oligonucleotides, which are then degraded further into small acid-soluble oligonucleotides. The chain is Exodeoxyribonuclease 7 large subunit from Pseudoalteromonas atlantica (strain T6c / ATCC BAA-1087).